The sequence spans 59 residues: UPF0434 protein PMI0721 (59 aa).

It belongs to the UPF0434 family.

This Proteus mirabilis (strain HI4320) protein is UPF0434 protein PMI0721.